We begin with the raw amino-acid sequence, 339 residues long: Probable cytosolic iron-sulfur protein assembly protein CIAO1 (339 aa).

7 WD repeats span residues 14–53 (HPDS…WICK), 59–98 (GHQR…FECV), 103–142 (GHEN…EYEC), 148–187 (SHTQ…WVCC), 192–231 (GHES…NEQG), 250–289 (FHSR…DPQQ), and 301–339 (AHSQ…PEGL). The short motif at 176-178 (LYR) is the LYR motif; required for interaction with HSC20 element.

This sequence belongs to the WD repeat CIA1 family. As to quaternary structure, component of the CIA complex. Interacts with CIAO2A and forms a complex with CIAO2B and MMS19; the interactions with CIAO2A and CIAO2B are mutually exclusive. Interacts with CHD1L, ERCC2, IREB2 and POLD1. Component of the MMXD complex, which includes CIAO1, ERCC2, CIAO2B, MMS19 and SLC25A5. Interacts with WT1. Interacts with CIAO3. Interacts (via LYR motif) with HSC20.

Its subcellular location is the cytoplasm. In terms of biological role, key component of the cytosolic iron-sulfur protein assembly (CIA) complex, a multiprotein complex that mediates the incorporation of iron-sulfur cluster into extramitochondrial Fe/S proteins. As a CIA complex component, interacts specifically with CIAO2A or CIAO2B and MMS19 to assist different branches of iron-sulfur protein assembly, depending of its interactors. The complex CIAO1:CIAO2B:MMS19 binds to and facilitates the assembly of most cytosolic-nuclear Fe/S proteins. CIAO1:CIAO2A specifically matures ACO1 and stabilizes IREB2. Seems to specifically modulate the transactivation activity of WT1. As part of the mitotic spindle-associated MMXD complex it may play a role in chromosome segregation. This Homo sapiens (Human) protein is Probable cytosolic iron-sulfur protein assembly protein CIAO1.